The following is a 143-amino-acid chain: Papain inhibitor (143 aa).

The first 33 residues, 1–33 (MREFRRVRRVRFAACALVAAATGITLAAGPASA), serve as a signal peptide directing secretion.

In terms of assembly, monomer.

The protein resides in the secreted. Functionally, stress protein produced under hyperthermal stress conditions. Serves as a glutamine and lysine donor substrate for transglutaminase. Inhibits the cysteine proteases papain and bromelain as well as the bovine serine protease trypsin. Has hardly any or no effect on subtilisin, bovine chymotrypsin, proteinase K from T.album, transglutaminase-activating metalloproteinase (TAMEP) from S.mobaraensis, dispase from B.polymyxa, thermolysin from B.thermoproteolyticus or collagenase from C.histolyticum. The polypeptide is Papain inhibitor (pi) (Streptomyces mobaraensis (Streptoverticillium mobaraense)).